The sequence spans 912 residues: Phosphoenolpyruvate carboxylase (912 aa).

Active-site residues include H138 and K575.

Belongs to the PEPCase type 1 family. Mg(2+) serves as cofactor.

It carries out the reaction oxaloacetate + phosphate = phosphoenolpyruvate + hydrogencarbonate. Its function is as follows. Forms oxaloacetate, a four-carbon dicarboxylic acid source for the tricarboxylic acid cycle. The sequence is that of Phosphoenolpyruvate carboxylase from Lactobacillus helveticus (strain DPC 4571).